Here is a 345-residue protein sequence, read N- to C-terminus: Phosphoribosylformylglycinamidine cyclo-ligase (345 aa).

The protein belongs to the AIR synthase family.

It localises to the cytoplasm. It carries out the reaction 2-formamido-N(1)-(5-O-phospho-beta-D-ribosyl)acetamidine + ATP = 5-amino-1-(5-phospho-beta-D-ribosyl)imidazole + ADP + phosphate + H(+). The protein operates within purine metabolism; IMP biosynthesis via de novo pathway; 5-amino-1-(5-phospho-D-ribosyl)imidazole from N(2)-formyl-N(1)-(5-phospho-D-ribosyl)glycinamide: step 2/2. The polypeptide is Phosphoribosylformylglycinamidine cyclo-ligase (Histophilus somni (strain 2336) (Haemophilus somnus)).